We begin with the raw amino-acid sequence, 597 residues long: Sodium/mannose cotransporter SLC5A10 (597 aa).

The Extracellular portion of the chain corresponds to M1–Q16. An N-linked (GlcNAc...) asparagine glycan is attached at N5. Residues L17–I37 traverse the membrane as a helical segment. Residues W38–G73 lie on the Cytoplasmic side of the membrane. S49 is subject to Phosphoserine. A helical membrane pass occupies residues S74–F94. Residues D95–Y100 lie on the Extracellular side of the membrane. The helical transmembrane segment at V101–L121 threads the bilayer. Residues A122 to Y137 are Cytoplasmic-facing. The helical transmembrane segment at L138 to G158 threads the bilayer. Over A159–Y171 the chain is Extracellular. A helical membrane pass occupies residues L172–I194. Residues Y195 to Q200 are Cytoplasmic-facing. Residues T201 to I219 traverse the membrane as a helical segment. The Extracellular segment spans residues D220–T265. A helical membrane pass occupies residues G266 to V286. Over Q287–G301 the chain is Cytoplasmic. A helical transmembrane segment spans residues S302 to I322. Residues S323–R367 lie on the Extracellular side of the membrane. Residues G368 to S390 traverse the membrane as a helical segment. Topologically, residues T391–L410 are cytoplasmic. The helical transmembrane segment at L411–V431 threads the bilayer. Over L432–M444 the chain is Extracellular. The helical transmembrane segment at Q445 to W465 threads the bilayer. Residues Q466–G472 lie on the Cytoplasmic side of the membrane. The helical transmembrane segment at A473–L493 threads the bilayer. At H494 to Y514 the chain is on the extracellular side. The chain crosses the membrane as a helical span at residues L515 to L535. Over T536–R576 the chain is Cytoplasmic. A helical transmembrane segment spans residues V577–A597.

The protein belongs to the sodium:solute symporter (SSF) (TC 2.A.21) family. Expressed only in kidney.

It is found in the apical cell membrane. It catalyses the reaction D-mannose(out) + Na(+)(out) = D-mannose(in) + Na(+)(in). The enzyme catalyses D-fructopyranose(out) + Na(+)(out) = D-fructopyranose(in) + Na(+)(in). Functionally, electrogenic Na+-coupled sugar symporter that actively transports D-mannose or D-fructose at the plasma membrane, with a Na+ to sugar coupling ratio of 1:1. Transporter activity is driven by a transmembrane Na+ electrochemical gradient set by the Na+/K+ pump. Exclusively recognizes sugar substrates having a pyranose ring with an axial hydroxyl group on carbon 2. Has likely evolved to enable renal reabsorption of D-mannose, an important constituent of oligosaccharide chains of glycoproteins. Contributes to dietary D-fructose reabsorption from glomerular filtrate across the brush border of the kidney. This chain is Sodium/mannose cotransporter SLC5A10 (SLC5A10), found in Oryctolagus cuniculus (Rabbit).